The sequence spans 257 residues: UPF0246 protein YaaA (257 aa).

Belongs to the UPF0246 family.

The sequence is that of UPF0246 protein YaaA from Salmonella schwarzengrund (strain CVM19633).